The primary structure comprises 309 residues: Methionyl-tRNA formyltransferase (309 aa).

109–112 (SLLP) serves as a coordination point for (6S)-5,6,7,8-tetrahydrofolate.

This sequence belongs to the Fmt family.

The catalysed reaction is L-methionyl-tRNA(fMet) + (6R)-10-formyltetrahydrofolate = N-formyl-L-methionyl-tRNA(fMet) + (6S)-5,6,7,8-tetrahydrofolate + H(+). Functionally, attaches a formyl group to the free amino group of methionyl-tRNA(fMet). The formyl group appears to play a dual role in the initiator identity of N-formylmethionyl-tRNA by promoting its recognition by IF2 and preventing the misappropriation of this tRNA by the elongation apparatus. This chain is Methionyl-tRNA formyltransferase, found in Clostridium perfringens (strain SM101 / Type A).